Consider the following 64-residue polypeptide: uncharacterized protein (64 aa).

Positions 1–26 (MVVKENFCGACLTIPLAFAGAGTAIG) are cleaved as a signal peptide. Residues 33–53 (IKKWSIVITIISLLLTVWFIY) traverse the membrane as a helical segment.

It belongs to the IIV-6 010R family.

The protein localises to the host membrane. This is an uncharacterized protein from Aedes vexans (Inland floodwater mosquito).